Reading from the N-terminus, the 187-residue chain is Ribosome-recycling factor (187 aa).

The protein belongs to the RRF family.

It localises to the cytoplasm. Responsible for the release of ribosomes from messenger RNA at the termination of protein biosynthesis. May increase the efficiency of translation by recycling ribosomes from one round of translation to another. The polypeptide is Ribosome-recycling factor (Petrotoga mobilis (strain DSM 10674 / SJ95)).